The primary structure comprises 666 residues: Probable potassium transport system protein Kup (666 aa).

Helical transmembrane passes span 16–36, 58–78, 100–120, 141–161, 165–185, 221–241, 253–273, 292–312, 343–363, 373–393, 399–419, and 424–444; these read GFII…LYTM, ISLI…LIAL, PWLI…GALT, IYQN…VLFG, FGTG…FSFL, IFIL…YSDL, WPFV…WILA, LTVY…QALI, LYIP…VLYF, YGLA…YYLI, PFLA…FFWA, and FMHG…VMFI.

It belongs to the HAK/KUP transporter (TC 2.A.72) family.

The protein resides in the cell membrane. It catalyses the reaction K(+)(in) + H(+)(in) = K(+)(out) + H(+)(out). Functionally, transport of potassium into the cell. Likely operates as a K(+):H(+) symporter. The sequence is that of Probable potassium transport system protein Kup from Streptococcus pyogenes serotype M5 (strain Manfredo).